The sequence spans 383 residues: Succinyl-diaminopimelate desuccinylase (383 aa).

His73 contributes to the Zn(2+) binding site. The active site involves Asp75. Asp107 provides a ligand contact to Zn(2+). Catalysis depends on Glu141, which acts as the Proton acceptor. 3 residues coordinate Zn(2+): Glu142, Glu170, and His356.

Belongs to the peptidase M20A family. DapE subfamily. In terms of assembly, homodimer. It depends on Zn(2+) as a cofactor. The cofactor is Co(2+).

It catalyses the reaction N-succinyl-(2S,6S)-2,6-diaminopimelate + H2O = (2S,6S)-2,6-diaminopimelate + succinate. It functions in the pathway amino-acid biosynthesis; L-lysine biosynthesis via DAP pathway; LL-2,6-diaminopimelate from (S)-tetrahydrodipicolinate (succinylase route): step 3/3. Its function is as follows. Catalyzes the hydrolysis of N-succinyl-L,L-diaminopimelic acid (SDAP), forming succinate and LL-2,6-diaminopimelate (DAP), an intermediate involved in the bacterial biosynthesis of lysine and meso-diaminopimelic acid, an essential component of bacterial cell walls. This is Succinyl-diaminopimelate desuccinylase from Pseudomonas syringae pv. tomato (strain ATCC BAA-871 / DC3000).